Consider the following 225-residue polypeptide: Ribosomal RNA small subunit methyltransferase G (225 aa).

S-adenosyl-L-methionine-binding positions include glycine 69, 119–120, and arginine 136; that span reads AE.

It belongs to the methyltransferase superfamily. RNA methyltransferase RsmG family.

It localises to the cytoplasm. Its function is as follows. Specifically methylates the N7 position of a guanine in 16S rRNA. This chain is Ribosomal RNA small subunit methyltransferase G, found in Pseudothermotoga lettingae (strain ATCC BAA-301 / DSM 14385 / NBRC 107922 / TMO) (Thermotoga lettingae).